A 433-amino-acid polypeptide reads, in one-letter code: MTATWEKKEGNEGLLTVTVPAEKVNKALDQAFKKVVKQINVPGFRKGKVPRPIFEQRFGVEALYQDAIDILLPDAYGEAIDETDIKPVAQPEVSVTQIEKGKDFIFEATVTVEPEVKLGDYKGLEIEKQETELSDDELQEAIDHSLGHLAEMVVKEDGVVENGDTVNIDFSGSVDGEEFEGGQAEGYDLEIGSGSFIPGFEEQLEGMKVDEEKDVVVTFPEEYHAEELAGKEATFKTKVNEIKFKEVPELTDEIANELDAEANTVDEYKENLRKRLAEQKATDAENVEKEEAITKATDNTTIDIPEAMVNTELDRMVSEFAQRIQQQGLDLQTYFQISGQDESQLREQMKDDAEQRVKTNLTLTAIAEAEKIEATDEDIDKELEKMSKQFNISVEDIKNTLGNTDIIKNDVRIQKVIDLLRDNAKFVEGTKED.

A PPIase FKBP-type domain is found at G163–P248.

Belongs to the FKBP-type PPIase family. Tig subfamily.

The protein localises to the cytoplasm. The catalysed reaction is [protein]-peptidylproline (omega=180) = [protein]-peptidylproline (omega=0). Functionally, involved in protein export. Acts as a chaperone by maintaining the newly synthesized protein in an open conformation. Functions as a peptidyl-prolyl cis-trans isomerase. This chain is Trigger factor, found in Staphylococcus aureus (strain bovine RF122 / ET3-1).